Here is a 452-residue protein sequence, read N- to C-terminus: PHO85 cyclin CLG1 (452 aa).

This sequence belongs to the cyclin family. PCL1,2 subfamily. In terms of assembly, forms a cyclin-CDK complex with PHO85.

Functionally, cyclin partner of the cyclin-dependent kinase (CDK) PHO85. Has a role in cell integrity and polarized cell growth together with the other PCL1/PCL2 cyclin family members. This chain is PHO85 cyclin CLG1 (CLG1), found in Saccharomyces cerevisiae (strain ATCC 204508 / S288c) (Baker's yeast).